We begin with the raw amino-acid sequence, 77 residues long: Cysteine-rich protein 1 (77 aa).

The region spanning 2 to 63 (PKCPKCNKEV…HPCYAAMFGP (62 aa)) is the LIM zinc-binding domain. Residues K9 and K22 each carry the N6-acetyllysine modification. At R68 the chain carries Omega-N-methylarginine.

Its function is as follows. Seems to have a role in zinc absorption and may function as an intracellular zinc transport protein. In Homo sapiens (Human), this protein is Cysteine-rich protein 1 (CRIP1).